The primary structure comprises 524 residues: Acetyl-CoA hydrolase (524 aa).

275 to 279 (GIGNI) contacts CoA. The active-site 5-glutamyl coenzyme A thioester intermediate is E300. Residues N390 and G394 each coordinate CoA.

It belongs to the acetyl-CoA hydrolase/transferase family.

The protein resides in the cytoplasm. The enzyme catalyses acetyl-CoA + H2O = acetate + CoA + H(+). Presumably involved in regulating the intracellular acetyl-CoA pool for fatty acid and cholesterol synthesis and fatty acid oxidation. This Candida albicans (strain SC5314 / ATCC MYA-2876) (Yeast) protein is Acetyl-CoA hydrolase (ACH1).